The following is a 393-amino-acid chain: Adaptive-response sensory kinase SasA (393 aa).

A Histidine kinase domain is found at 171 to 393; it reads MLAHDLRSPL…CFHFTLPVFR (223 aa). Residue His-174 is modified to Phosphohistidine; by autocatalysis.

In terms of assembly, homooligomerizes. Interacts with KaiC. Participates in the KaiABC clock complex, whose core is composed of a KaiC homohexamer, 6 KaiB and up to 6 KaiA dimers. SasA and KaiB(fs) compete to bind to KaiC.

The catalysed reaction is ATP + protein L-histidine = ADP + protein N-phospho-L-histidine.. Its function is as follows. Member of the two-component regulatory system SasA/RpaA involved in genome-wide circadian gene expression. One of several clock output pathways. Participates in the Kai clock protein complex, the main circadian regulator in cyanobacteria, via its interaction with KaiC. KaiC enhances the autophosphorylation activity of SasA, which then transfers its phosphate group to RpaA to activate it. In addition to its output function, recruits fold-shifted KaiB (KaiB(fs)) to KaiC to cooperatively form the KaiB(6):KaiC(6) complex (independent of SasA kinase activity). Required for robustness of the circadian rhythm of gene expression and is involved in clock output, also required for adaptation to light/dark cycles. The polypeptide is Adaptive-response sensory kinase SasA (Gloeothece citriformis (strain PCC 7424) (Cyanothece sp. (strain PCC 7424))).